The primary structure comprises 271 residues: Carboxy-terminal domain RNA polymerase II polypeptide A small phosphatase 2 (271 aa).

A Phosphoserine modification is found at Ser5. One can recognise an FCP1 homology domain in the interval 97–255 (EDQGRICVVI…LNLIPIFEEL (159 aa)). Asp107 (4-aspartylphosphate intermediate) is an active-site residue. Mg(2+)-binding residues include Asp107, Asp109, and Asn218. Asp109 (proton donor) is an active-site residue.

As to quaternary structure, monomer. Interacts with REST. Mg(2+) serves as cofactor. Expression is restricted to non-neuronal tissues. Highest expression in pancreas and lowest in liver.

The protein resides in the nucleus. It carries out the reaction O-phospho-L-seryl-[protein] + H2O = L-seryl-[protein] + phosphate. It catalyses the reaction O-phospho-L-threonyl-[protein] + H2O = L-threonyl-[protein] + phosphate. Functionally, preferentially catalyzes the dephosphorylation of 'Ser-5' within the tandem 7 residue repeats in the C-terminal domain (CTD) of the largest RNA polymerase II subunit POLR2A. Negatively regulates RNA polymerase II transcription, possibly by controlling the transition from initiation/capping to processive transcript elongation. Recruited by REST to neuronal genes that contain RE-1 elements, leading to neuronal gene silencing in non-neuronal cells. May contribute to the development of sarcomas. The polypeptide is Carboxy-terminal domain RNA polymerase II polypeptide A small phosphatase 2 (CTDSP2) (Homo sapiens (Human)).